Consider the following 215-residue polypeptide: uncharacterized protein (215 aa).

The next 6 membrane-spanning stretches (helical) occupy residues 3-23 (LLAY…LRSI), 30-50 (ANLL…GLTW), 59-79 (LGLS…LRFW), 87-107 (WGTY…AICV), 122-142 (VSTC…SNIY), and 156-176 (VLFG…LIYV).

Belongs to the major facilitator superfamily. Allantoate permease family.

Its subcellular location is the membrane. This is an uncharacterized protein from Saccharomyces cerevisiae (strain ATCC 204508 / S288c) (Baker's yeast).